The following is an 84-amino-acid chain: Small ribosomal subunit protein uS17 (84 aa).

This sequence belongs to the universal ribosomal protein uS17 family. In terms of assembly, part of the 30S ribosomal subunit.

Its function is as follows. One of the primary rRNA binding proteins, it binds specifically to the 5'-end of 16S ribosomal RNA. The sequence is that of Small ribosomal subunit protein uS17 from Aliivibrio salmonicida (strain LFI1238) (Vibrio salmonicida (strain LFI1238)).